The chain runs to 397 residues: Cytochrome b (397 aa).

The next 4 helical transmembrane spans lie at 38–58 (FGSL…FLAM), 82–104 (WLLR…LHIF), 119–139 (VWCL…IGYV), and 185–205 (FFSL…LHLA). Residues His-88 and His-102 each contribute to the heme b site. 2 residues coordinate heme b: His-189 and His-203. His-208 contributes to the a ubiquinone binding site. A run of 4 helical transmembrane segments spans residues 231-251 (FYVK…IWIF), 295-315 (AGGV…PFFK), 327-347 (IYQG…WIGC), and 354-373 (FVTI…AITP).

The protein belongs to the cytochrome b family. As to quaternary structure, the main subunits of complex b-c1 are: cytochrome b, cytochrome c1 and the Rieske protein. Heme b serves as cofactor.

Its subcellular location is the mitochondrion inner membrane. Its function is as follows. Component of the ubiquinol-cytochrome c reductase complex (complex III or cytochrome b-c1 complex) that is part of the mitochondrial respiratory chain. The b-c1 complex mediates electron transfer from ubiquinol to cytochrome c. Contributes to the generation of a proton gradient across the mitochondrial membrane that is then used for ATP synthesis. The polypeptide is Cytochrome b (MT-CYB) (Oryza sativa subsp. japonica (Rice)).